The following is a 286-amino-acid chain: ATP synthase gamma chain (286 aa).

The protein belongs to the ATPase gamma chain family. As to quaternary structure, F-type ATPases have 2 components, CF(1) - the catalytic core - and CF(0) - the membrane proton channel. CF(1) has five subunits: alpha(3), beta(3), gamma(1), delta(1), epsilon(1). CF(0) has three main subunits: a, b and c.

Its subcellular location is the cell inner membrane. In terms of biological role, produces ATP from ADP in the presence of a proton gradient across the membrane. The gamma chain is believed to be important in regulating ATPase activity and the flow of protons through the CF(0) complex. In Pseudoalteromonas translucida (strain TAC 125), this protein is ATP synthase gamma chain.